The following is a 109-amino-acid chain: MEVKAIHRGARISAQKTRLVADQIRGLSIERALNVLTFSPKKAAGIVKKVVESAIANAEHNEGADIDELKVKSIYIDKATSLKRFTARAKGRGNRIEKQTCHITVTLGN.

The protein belongs to the universal ribosomal protein uL22 family. Part of the 50S ribosomal subunit.

Its function is as follows. This protein binds specifically to 23S rRNA; its binding is stimulated by other ribosomal proteins, e.g. L4, L17, and L20. It is important during the early stages of 50S assembly. It makes multiple contacts with different domains of the 23S rRNA in the assembled 50S subunit and ribosome. Functionally, the globular domain of the protein is located near the polypeptide exit tunnel on the outside of the subunit, while an extended beta-hairpin is found that lines the wall of the exit tunnel in the center of the 70S ribosome. The chain is Large ribosomal subunit protein uL22 from Ralstonia pickettii (strain 12J).